The following is a 489-amino-acid chain: Betaine aldehyde dehydrogenase (489 aa).

Residues threonine 26 and aspartate 93 each contribute to the K(+) site. NAD(+) is bound at residue 150–152; the sequence is GAW. Lysine 162 acts as the Charge relay system in catalysis. 176-179 is an NAD(+) binding site; sequence KPSE. Valine 180 contributes to the K(+) binding site. 229-232 provides a ligand contact to NAD(+); the sequence is GVET. Leucine 245 lines the K(+) pocket. Glutamate 251 serves as the catalytic Proton acceptor. Residues glycine 253, cysteine 285, and glutamate 386 each coordinate NAD(+). The active-site Nucleophile is cysteine 285. Cysteine 285 carries the post-translational modification Cysteine sulfenic acid (-SOH). Positions 456 and 459 each coordinate K(+). Glutamate 463 functions as the Charge relay system in the catalytic mechanism.

Belongs to the aldehyde dehydrogenase family. In terms of assembly, dimer of dimers. The cofactor is K(+).

The enzyme catalyses betaine aldehyde + NAD(+) + H2O = glycine betaine + NADH + 2 H(+). It participates in amine and polyamine biosynthesis; betaine biosynthesis via choline pathway; betaine from betaine aldehyde: step 1/1. Functionally, involved in the biosynthesis of the osmoprotectant glycine betaine. Catalyzes the irreversible oxidation of betaine aldehyde to the corresponding acid. This Burkholderia ambifaria (strain ATCC BAA-244 / DSM 16087 / CCUG 44356 / LMG 19182 / AMMD) (Burkholderia cepacia (strain AMMD)) protein is Betaine aldehyde dehydrogenase.